Consider the following 571-residue polypeptide: Phosphoenolpyruvate-protein phosphotransferase (571 aa).

The active-site Tele-phosphohistidine intermediate is His203. Phosphoenolpyruvate is bound by residues Arg306 and Arg342. Residues Glu429 and Asp453 each coordinate Mg(2+). Phosphoenolpyruvate-binding positions include 452 to 453 (ND) and Arg463. Residue Cys500 is the Proton donor of the active site.

It belongs to the PEP-utilizing enzyme family. Homodimer. The cofactor is Mg(2+).

The protein localises to the cytoplasm. The enzyme catalyses L-histidyl-[protein] + phosphoenolpyruvate = N(pros)-phospho-L-histidyl-[protein] + pyruvate. Its function is as follows. General (non sugar-specific) component of the phosphoenolpyruvate-dependent sugar phosphotransferase system (sugar PTS). This major carbohydrate active-transport system catalyzes the phosphorylation of incoming sugar substrates concomitantly with their translocation across the cell membrane. Enzyme I transfers the phosphoryl group from phosphoenolpyruvate (PEP) to the phosphoryl carrier protein (HPr). In Chlamydia pneumoniae (Chlamydophila pneumoniae), this protein is Phosphoenolpyruvate-protein phosphotransferase (ptsI).